A 275-amino-acid chain; its full sequence is MTELQQIIEAAFERRDSITPGSVDAATKSAILQTIDLLDAGKARVAEKIAGEWVVHQWLKKAVLLYFRINDNGIIKGDDAQYYDKVPLKFSDYTAEQFKEAGVRVVPPATARKGSFIAPNTVLMPSYVNIGAFVDEGTMVDTWATVGSCAQIGKNVHLSGGVGIGGVLEPLQANPTIIEDNCFIGARSEVVEGVIVEEGSVISMGVFIGQSTRIYDRETGEIHYGRVPAGSVVVSGSLPSKCGKYSLYAAVIVKKVDAKTRAKVGINALLRSIDE.

Substrate-binding residues include Arg-104 and Asp-141.

It belongs to the transferase hexapeptide repeat family. In terms of assembly, homotrimer.

It is found in the cytoplasm. It catalyses the reaction (S)-2,3,4,5-tetrahydrodipicolinate + succinyl-CoA + H2O = (S)-2-succinylamino-6-oxoheptanedioate + CoA. Its pathway is amino-acid biosynthesis; L-lysine biosynthesis via DAP pathway; LL-2,6-diaminopimelate from (S)-tetrahydrodipicolinate (succinylase route): step 1/3. This Aeromonas salmonicida (strain A449) protein is 2,3,4,5-tetrahydropyridine-2,6-dicarboxylate N-succinyltransferase.